Reading from the N-terminus, the 265-residue chain is MEENEQNNREVEPQQESGEESNRGILHQAPPGNHQPHHRITNFFIDNILRPEFGRRKEGISHQDELYTERDTGALSGAESGHHRVNVPEGAGGSSKVITVTGEKKSDLAMEETLKSRGLNGDHSLSSDSDSSQTSSKATQQPMLWPAWVYCTRYSDRPSSGPRSRKPKKKSVSKEDKRPRTAFTADQLQRLKAEFQTNRYLTEQRRQSLAQELSLNESQIKIWFQNKRAKIKKATGNKNSLALHLMAQGLYNHSTTSKDGKSDSE.

Composition is skewed to basic and acidic residues over residues 1-12 and 102-115; these read MEENEQNNREVE and GEKK…ETLK. Disordered stretches follow at residues 1 to 38, 75 to 140, and 156 to 181; these read MEEN…QPHH, LSGA…KATQ, and DRPS…RPRT. Low complexity predominate over residues 122 to 136; that stretch reads DHSLSSDSDSSQTSS. A DNA-binding region (homeobox) is located at residues 176-235; that stretch reads DKRPRTAFTADQLQRLKAEFQTNRYLTEQRRQSLAQELSLNESQIKIWFQNKRAKIKKAT.

The protein belongs to the engrailed homeobox family.

It localises to the nucleus. The polypeptide is Homeobox protein engrailed-2-A (en2-a) (Xenopus laevis (African clawed frog)).